The following is a 94-amino-acid chain: Fungal defensin scedosporisin-2 (94 aa).

The N-terminal stretch at 1–25 (MKFSNISIAALFTILASTAMAAPAA) is a signal peptide. Residues 26–56 (DSPDSIVAREPAPVEETYEAPSGLEKRGFGC) constitute a propeptide that is removed on maturation. Beta-D-GlcNAc-(1-&gt;4)-Mur2Ac(oyl-L-Ala-gamma-D-Glu-L-Lys-D-Ala-D-Ala)-di-trans,octa-cis-undecaprenyl diphosphate contacts are provided by F54, G55, and C56. 3 disulfide bridges follow: C56–C78, C63–C91, and C67–C93. The interaction site with membrane interface stretch occupies residues 57 to 60 (PGSE). H66 contributes to the beta-D-GlcNAc-(1-&gt;4)-Mur2Ac(oyl-L-Ala-gamma-D-Glu-L-Lys-D-Ala-D-Ala)-di-trans,octa-cis-undecaprenyl diphosphate binding site. An interaction site with membrane interface region spans residues 83-90 (IPFVGRPR). C91 contributes to the beta-D-GlcNAc-(1-&gt;4)-Mur2Ac(oyl-L-Ala-gamma-D-Glu-L-Lys-D-Ala-D-Ala)-di-trans,octa-cis-undecaprenyl diphosphate binding site.

It belongs to the invertebrate defensin family.

It is found in the secreted. The protein resides in the target cell membrane. Antibacterial peptide potently active against Gram-positive bacteria. May act by selectively inhibiting peptidoglycan biosynthesis through complex formation with the cell wall precursor lipid II (1:1 molar ratio) thus inhibiting cell wall synthesis. Shows remarkably activity against resistant isolates such as methicillin-resistant Staphylococcus aureus (MRSA) and vancomycin-resistant Enterococci (VRE) at the concentration of micromolar level. Does not act by destroying the membrane integrity, which is consistent with its nonamphiphilic architecture. Acts more rapidly than vancomycin. Shows low hemolysis and cytotoxicity and high serum stability. In vivo, is as efficient as vancomycin to protect mouse peritonitis models from MRSA infections. The sequence is that of Fungal defensin scedosporisin-2 from Pseudallescheria apiosperma (Scedosporium apiospermum).